We begin with the raw amino-acid sequence, 186 residues long: Pyridoxal 5'-phosphate synthase subunit PdxT (186 aa).

An L-glutamine-binding site is contributed by 47–49 (GES). Cys76 (nucleophile) is an active-site residue. L-glutamine is bound by residues Arg102 and 130–131 (IR). Residues His166 and Glu168 each act as charge relay system in the active site.

Belongs to the glutaminase PdxT/SNO family. In terms of assembly, in the presence of PdxS, forms a dodecamer of heterodimers. Only shows activity in the heterodimer.

It carries out the reaction aldehydo-D-ribose 5-phosphate + D-glyceraldehyde 3-phosphate + L-glutamine = pyridoxal 5'-phosphate + L-glutamate + phosphate + 3 H2O + H(+). The catalysed reaction is L-glutamine + H2O = L-glutamate + NH4(+). It participates in cofactor biosynthesis; pyridoxal 5'-phosphate biosynthesis. In terms of biological role, catalyzes the hydrolysis of glutamine to glutamate and ammonia as part of the biosynthesis of pyridoxal 5'-phosphate. The resulting ammonia molecule is channeled to the active site of PdxS. The sequence is that of Pyridoxal 5'-phosphate synthase subunit PdxT from Staphylococcus epidermidis (strain ATCC 35984 / DSM 28319 / BCRC 17069 / CCUG 31568 / BM 3577 / RP62A).